We begin with the raw amino-acid sequence, 513 residues long: Na(+)/H(+) antiporter NhaB (513 aa).

11 helical membrane passes run 21–41, 88–108, 119–139, 143–163, 208–228, 247–267, 303–323, 357–377, 389–409, 447–467, and 477–497; these read ITIVLFLIINPIIFFFISPFI, IIANFEVILLLIFMVAGIYFM, LLLSIRSKMVLSLAFCLSAAF, FLDALTVVAVIISVGMGFYGV, VGTALGGVMTMVGEPQNLIIA, LPVLICGLVTCFLVEKFGVFG, ALIGIWLVVGLAFHLAAVGII, LVVFFSVVAVIIDQHLFAPII, LALFYIFNGLLSAISDNVFVA, ATPNGQAAFLFLLTSSLAPLI, and MALPYTIVLSCIGLLAVEYIL.

It belongs to the NhaB Na(+)/H(+) (TC 2.A.34) antiporter family.

It localises to the cell inner membrane. It catalyses the reaction 2 Na(+)(in) + 3 H(+)(out) = 2 Na(+)(out) + 3 H(+)(in). Functionally, na(+)/H(+) antiporter that extrudes sodium in exchange for external protons. The sequence is that of Na(+)/H(+) antiporter NhaB from Pasteurella multocida (strain Pm70).